Reading from the N-terminus, the 212-residue chain is Ribonuclease P protein component 3 (212 aa).

Belongs to the eukaryotic/archaeal RNase P protein component 3 family. As to quaternary structure, consists of a catalytic RNA component and at least 4-5 protein subunits.

Its subcellular location is the cytoplasm. It catalyses the reaction Endonucleolytic cleavage of RNA, removing 5'-extranucleotides from tRNA precursor.. Functionally, part of ribonuclease P, a protein complex that generates mature tRNA molecules by cleaving their 5'-ends. This Pyrococcus abyssi (strain GE5 / Orsay) protein is Ribonuclease P protein component 3.